Consider the following 400-residue polypeptide: Phosphoglycerate kinase (400 aa).

Substrate contacts are provided by residues 23–25, arginine 38, 61–64, arginine 120, and arginine 153; these read DLN and HFGR. Residues lysine 203, glutamate 325, and 355 to 358 contribute to the ATP site; that span reads GGDT.

Belongs to the phosphoglycerate kinase family. Monomer.

It is found in the cytoplasm. The catalysed reaction is (2R)-3-phosphoglycerate + ATP = (2R)-3-phospho-glyceroyl phosphate + ADP. Its pathway is carbohydrate degradation; glycolysis; pyruvate from D-glyceraldehyde 3-phosphate: step 2/5. The chain is Phosphoglycerate kinase from Methylobacterium radiotolerans (strain ATCC 27329 / DSM 1819 / JCM 2831 / NBRC 15690 / NCIMB 10815 / 0-1).